A 288-amino-acid chain; its full sequence is Protein shisa-2 (288 aa).

The N-terminal stretch at 1-23 (MWLEGSPLAVLAAVSFLLSVLAA) is a signal peptide. At 24–110 (AQGSGEYCHG…DSTAVPIYVP (87 aa)) the chain is on the extracellular side. The chain crosses the membrane as a helical span at residues 111-131 (FLIVGSVFVAFIIVGSLVAIC). Residues 132-288 (CCRCLRPKQE…EQMMYPAVTV (157 aa)) lie on the Cytoplasmic side of the membrane. Over residues 161 to 188 (SSASTSRGSSSRQSSTAASSSSSANSGA) the composition is skewed to low complexity. Positions 161 to 198 (SSASTSRGSSSRQSSTAASSSSSANSGARPPPTRSQTN) are disordered.

This sequence belongs to the shisa family. As to quaternary structure, interacts with fzd8 and fgfr1.

It is found in the endoplasmic reticulum membrane. In terms of biological role, plays an essential role in the maturation of presomitic mesoderm cells by individual attenuation of both fgf and wnt signaling. Inhibits both wnt and fgf signaling through the regulation of protein maturation and cell surface transportation of their receptors within the endoplasmic reticulum. This is Protein shisa-2 (shisa2) from Xenopus laevis (African clawed frog).